Here is a 285-residue protein sequence, read N- to C-terminus: SLAM family member 8 (285 aa).

The N-terminal stretch at 1-22 (MVMRPLWSLLLWEALLPITVTG) is a signal peptide. The Extracellular portion of the chain corresponds to 23–233 (AQVLSKVGGS…AAPGKASYKD (211 aa)). A glycan (N-linked (GlcNAc...) asparagine) is linked at asparagine 85. In terms of domain architecture, Ig-like C2-type spans 128 to 215 (PVVQVFIAVE…PVSWDLATVT (88 aa)). A disulfide bond links cysteine 152 and cysteine 201. The chain crosses the membrane as a helical span at residues 234-254 (VLLVVVPVSLLLMLVTLFSAW). Over 255–285 (HWCPCSGKKKKDVHADRVGPETENPLVQDLP) the chain is Cytoplasmic. The interval 262–285 (KKKKDVHADRVGPETENPLVQDLP) is disordered.

As to expression, expressed in lymph node, spleen, thymus and bone marrow.

The protein localises to the membrane. In terms of biological role, may play a role in B-lineage commitment and/or modulation of signaling through the B-cell receptor. The polypeptide is SLAM family member 8 (SLAMF8) (Homo sapiens (Human)).